A 412-amino-acid chain; its full sequence is Divalent metal cation transporter MntH (412 aa).

At 1–19 (MTNYRVESSSGRAARKMRL) the chain is on the cytoplasmic side. A helical membrane pass occupies residues 20-39 (ALMGPAFIAAIGYIDPGNFA). The Periplasmic segment spans residues 40-51 (TNIQAGASFGYQ). A helical membrane pass occupies residues 52 to 71 (LLWVVVWANLMAMLIQILSA). The Cytoplasmic segment spans residues 72–95 (KLGIATGKNLAEQIRDHYPRPFVW). Residues 96-118 (FYWVQAEIIAMATDLAEFIGAAI) traverse the membrane as a helical segment. Residues 119-125 (GFKLILG) are Periplasmic-facing. The helical transmembrane segment at 126–145 (VSLLQGAVLTGIATFLILML) threads the bilayer. Over 146–155 (QRRGQKPLEK) the chain is Cytoplasmic. Residues 156–175 (VIGGLLLFVAAAYIVELIFS) form a helical membrane-spanning segment. At 176–196 (QPNLAQLGKGMVIPSLPTSEA) the chain is on the periplasmic side. The chain crosses the membrane as a helical span at residues 197 to 220 (VFLAAGVLGATIMPHVIYLHSSLT). Residues 221–238 (QHLHGGSRQQRYSATKWD) are Cytoplasmic-facing. Residues 239–258 (VAIAMTIAGFVNLAMMATAA) traverse the membrane as a helical segment. Topologically, residues 259 to 276 (AAFHFSGHTGVADLDEAY) are periplasmic. Residues 277–297 (LTLQPLLSHAAATVFGLSLVA) traverse the membrane as a helical segment. Topologically, residues 298 to 327 (AGLSSTVVGTLAGQVVMQGFIRFHIPLWVR) are cytoplasmic. Residues 328–344 (RTVTMLPSFIVILMGLD) form a helical membrane-spanning segment. The Periplasmic segment spans residues 345–350 (PTRILV). A helical transmembrane segment spans residues 351 to 370 (MSQVLLSFGIALALVPLLIF). Topologically, residues 371 to 387 (TSDSKLMGDLVNSKRVK) are cytoplasmic. The helical transmembrane segment at 388-406 (QTGWVIVVLVVALNIWLLV) threads the bilayer. Over 407-412 (GTALGL) the chain is Periplasmic.

It belongs to the NRAMP family.

Its subcellular location is the cell inner membrane. Its function is as follows. H(+)-stimulated, divalent metal cation uptake system. In Escherichia coli O127:H6 (strain E2348/69 / EPEC), this protein is Divalent metal cation transporter MntH.